The following is a 160-amino-acid chain: Protein max (160 aa).

Positions 1–13 are enriched in acidic residues; the sequence is MSDNDDIEVESDE. The tract at residues 1 to 40 is disordered; sequence MSDNDDIEVESDEEQPRFQSAADKRAHHNALERKRRDHIK. Ser2 is modified (N-acetylserine). Phosphoserine is present on residues Ser2 and Ser11. Residues 23 to 74 enclose the bHLH domain; that stretch reads DKRAHHNALERKRRDHIKDSFHSLRDSVPSLQGEKASRAQILDKATEYIQYM. The segment covering 29–40 has biased composition (basic and acidic residues); it reads NALERKRRDHIK. Lys66 is subject to N6-acetyllysine. The interval 81-102 is leucine-zipper; the sequence is HQQDIDDLKRQNALLEQQVRAL. Residues 105-160 form a disordered region; sequence ARSSAQLQTNYPSSDNSLYTNAKGGTISAFDGGSDSSSESEPEEPQNRKKLRMEAS. Position 107 is a phosphoserine (Ser107). A compositionally biased stretch (polar residues) spans 107–124; sequence SSAQLQTNYPSSDNSLYT. Residues Lys153 and Lys154 each carry the N6-acetyllysine modification.

It belongs to the MAX family. As to quaternary structure, efficient DNA binding requires dimerization with another bHLH protein. Binds DNA as a heterodimer with MYC or MAD. Part of the E2F6.com-1 complex in G0 phase composed of E2F6, MGA, MAX, TFDP1, CBX3, BAT8, EUHMTASE1, RING1, RNF2, MBLR, L3MBTL2 and YAF2. Component of some MLL1/MLL complex, at least composed of the core components KMT2A/MLL1, ASH2L, HCFC1/HCF1, WDR5 and RBBP5, as well as the facultative components BACC1, CHD8, E2F6, HSP70, INO80C, KANSL1, LAS1L, MAX, MCRS1, MGA, MYST1/MOF, PELP1, PHF20, PRP31, RING2, RUVB1/TIP49A, RUVB2/TIP49B, SENP3, TAF1, TAF4, TAF6, TAF7, TAF9 and TEX10. Interacts with SPAG9. The heterodimer MYC:MAX interacts with ABI1; the interaction may enhance MYC:MAX transcriptional activity. In terms of processing, phosphorylated.

The protein resides in the nucleus. Its subcellular location is the cell projection. It localises to the dendrite. Transcription regulator. Forms a sequence-specific DNA-binding protein complex with MYC or MAD which recognizes the core sequence 5'-CAC[GA]TG-3'. The MYC:MAX complex is a transcriptional activator, whereas the MAD:MAX complex is a repressor. May repress transcription via the recruitment of a chromatin remodeling complex containing H3 'Lys-9' histone methyltransferase activity. Represses MYC transcriptional activity from E-box elements. This is Protein max from Rattus norvegicus (Rat).